The primary structure comprises 142 residues: Transcriptional regulator MraZ (142 aa).

SpoVT-AbrB domains are found at residues 5–51 and 77–120; these read ASAL…PRPE and AADV…DAAT.

This sequence belongs to the MraZ family. In terms of assembly, forms oligomers.

Its subcellular location is the cytoplasm. It localises to the nucleoid. The protein is Transcriptional regulator MraZ of Cupriavidus taiwanensis (strain DSM 17343 / BCRC 17206 / CCUG 44338 / CIP 107171 / LMG 19424 / R1) (Ralstonia taiwanensis (strain LMG 19424)).